Reading from the N-terminus, the 348-residue chain is Phenylalanine--tRNA ligase alpha subunit (348 aa).

Glu259 is a Mg(2+) binding site.

This sequence belongs to the class-II aminoacyl-tRNA synthetase family. Phe-tRNA synthetase alpha subunit type 1 subfamily. Tetramer of two alpha and two beta subunits. The cofactor is Mg(2+).

Its subcellular location is the cytoplasm. The catalysed reaction is tRNA(Phe) + L-phenylalanine + ATP = L-phenylalanyl-tRNA(Phe) + AMP + diphosphate + H(+). The chain is Phenylalanine--tRNA ligase alpha subunit from Enterococcus faecalis (strain ATCC 700802 / V583).